A 544-amino-acid polypeptide reads, in one-letter code: Chaperonin GroEL (544 aa).

Residues 30 to 33 (TLGP), K51, 87 to 91 (DGTTT), G415, 479 to 481 (NAA), and D495 each bind ATP.

It belongs to the chaperonin (HSP60) family. As to quaternary structure, forms a cylinder of 14 subunits composed of two heptameric rings stacked back-to-back. Interacts with the co-chaperonin GroES.

It is found in the cytoplasm. It catalyses the reaction ATP + H2O + a folded polypeptide = ADP + phosphate + an unfolded polypeptide.. In terms of biological role, together with its co-chaperonin GroES, plays an essential role in assisting protein folding. The GroEL-GroES system forms a nano-cage that allows encapsulation of the non-native substrate proteins and provides a physical environment optimized to promote and accelerate protein folding. The polypeptide is Chaperonin GroEL (Francisella tularensis subsp. mediasiatica (strain FSC147)).